The following is a 168-amino-acid chain: Peptide deformylase (168 aa).

Cys-92 and His-134 together coordinate Fe cation. Glu-135 is a catalytic residue. His-138 provides a ligand contact to Fe cation.

The protein belongs to the polypeptide deformylase family. Fe(2+) serves as cofactor.

It catalyses the reaction N-terminal N-formyl-L-methionyl-[peptide] + H2O = N-terminal L-methionyl-[peptide] + formate. Its function is as follows. Removes the formyl group from the N-terminal Met of newly synthesized proteins. Requires at least a dipeptide for an efficient rate of reaction. N-terminal L-methionine is a prerequisite for activity but the enzyme has broad specificity at other positions. The chain is Peptide deformylase from Pseudomonas aeruginosa (strain ATCC 15692 / DSM 22644 / CIP 104116 / JCM 14847 / LMG 12228 / 1C / PRS 101 / PAO1).